We begin with the raw amino-acid sequence, 261 residues long: Acetylglutamate kinase (261 aa).

Residues 48–49, Arg70, and Asn164 each bind substrate; that span reads GG.

The protein belongs to the acetylglutamate kinase family. ArgB subfamily.

Its subcellular location is the cytoplasm. It catalyses the reaction N-acetyl-L-glutamate + ATP = N-acetyl-L-glutamyl 5-phosphate + ADP. The protein operates within amino-acid biosynthesis; L-arginine biosynthesis; N(2)-acetyl-L-ornithine from L-glutamate: step 2/4. Functionally, catalyzes the ATP-dependent phosphorylation of N-acetyl-L-glutamate. This Roseiflexus sp. (strain RS-1) protein is Acetylglutamate kinase.